We begin with the raw amino-acid sequence, 1093 residues long: Probable phosphorylase b kinase regulatory subunit beta (1093 aa).

A disordered region spans residues 1–27 (MRDVPKSLGLSVTTPGGSSGAPDSGRH). Calmodulin-binding regions lie at residues 6–27 (KSLG…SGRH), 751–778 (QLYH…IVDS), and 905–936 (EKLT…ILQR). Cys1090 carries S-farnesyl cysteine lipidation.

The protein belongs to the phosphorylase b kinase regulatory chain family. Post-translationally, although the final Cys may be farnesylated, the terminal tripeptide is probably not removed, and the C-terminus is not methylated.

It localises to the cell membrane. It functions in the pathway glycan biosynthesis; glycogen metabolism. Its function is as follows. Phosphorylase b kinase catalyzes the phosphorylation of serine in certain substrates, including troponin I. The beta chain acts as a regulatory unit and modulates the activity of the holoenzyme in response to phosphorylation. In Drosophila melanogaster (Fruit fly), this protein is Probable phosphorylase b kinase regulatory subunit beta.